Here is a 297-residue protein sequence, read N- to C-terminus: Nuclear transcription factor Y subunit B-11 (297 aa).

Residues 1–25 are disordered; that stretch reads MKSRKSYGHLLSPVGSPPLDNESGE. A DNA-binding region spans residues 63–69; that stretch reads LPIANVS. A subunit association domain (SAD) region spans residues 90-101; it reads VQECVSEFISFV.

Belongs to the NFYB/HAP3 subunit family. As to quaternary structure, heterotrimeric transcription factor composed of three components, NF-YA, NF-YB and NF-YC. NF-YB and NF-YC must interact and dimerize for NF-YA association and DNA binding. Interacts with NFYC2, NFYC4 and NFYC6. In terms of tissue distribution, expressed in roots, culms, nodes, leaf blades, leaf sheaths and young panicles.

Its subcellular location is the nucleus. The protein resides in the cytoplasm. Its function is as follows. Probable transcription factor involved in the regulation of flowering time under long day (LD) conditions. Functions as a repressor of flowering, independently of HD1 and GHD7. Controls flowering time by negatively regulating the expression of EHD1 and HD3A. Regulates plant height by promoting cell elongation in the internodes. Component of the NF-Y/HAP transcription factor complex. This chain is Nuclear transcription factor Y subunit B-11 (HD5), found in Oryza sativa subsp. japonica (Rice).